The following is a 305-amino-acid chain: UDP-3-O-acyl-N-acetylglucosamine deacetylase (305 aa).

Residues histidine 78, histidine 237, and aspartate 241 each contribute to the Zn(2+) site. Histidine 264 serves as the catalytic Proton donor.

Belongs to the LpxC family. It depends on Zn(2+) as a cofactor.

It catalyses the reaction a UDP-3-O-[(3R)-3-hydroxyacyl]-N-acetyl-alpha-D-glucosamine + H2O = a UDP-3-O-[(3R)-3-hydroxyacyl]-alpha-D-glucosamine + acetate. It participates in glycolipid biosynthesis; lipid IV(A) biosynthesis; lipid IV(A) from (3R)-3-hydroxytetradecanoyl-[acyl-carrier-protein] and UDP-N-acetyl-alpha-D-glucosamine: step 2/6. Functionally, catalyzes the hydrolysis of UDP-3-O-myristoyl-N-acetylglucosamine to form UDP-3-O-myristoylglucosamine and acetate, the committed step in lipid A biosynthesis. The chain is UDP-3-O-acyl-N-acetylglucosamine deacetylase from Burkholderia ambifaria (strain ATCC BAA-244 / DSM 16087 / CCUG 44356 / LMG 19182 / AMMD) (Burkholderia cepacia (strain AMMD)).